Reading from the N-terminus, the 595-residue chain is MRVAPEFYELLRNRINISDVVRQKVALTRKSGNYVGLCPFHQEKTPSFTVSDSKRFFYCFGCKAAGDVIKFTSNISGLSYNESAIKLATDYGIEIPKLTAKQKEFYEESDEILNILELANKFFRTQLTPEILNYLHERGITEETVKEFSIGFAPKNNKFEKFFHDKNIDIIKLGKAGLIGKRENGEIYNLFSNRITIPIRNIYNKIVGFGGRVLGEGLPKYLNSPETTVFQKSETLYGEHKAISSSYKKNHSILVEGYFDVIALHQAGFSEAVASLGTSVTENHLHKLWRAGDEIILCLDGDNAGIKASIRTINLALPLINSEKKISFIRLPNGLDPDDAVNKNGADFFAKLIDKRISLSEMIWHIEYSGKSFKTAEEKANLEKNLKDYCSKISDSNLKASYYRFFKEQIWQNLVTKQKKATTKNSNLAPIISSHGYSELEMLEHAFCALLVKFPIILEEKDIRDFILNLNFNNKSLEEFRNWYLNEIIDNNVEASEITAIVEKTSFFDIFLLLSKTDNLFLDISFNKNNIRLDLLWQWLHKKYYLINLQQEYSITINSTDNHDFEKVLLYKKEILKIANELQVLNESFINHTIT.

The CHC2-type zinc-finger motif lies at 38–62 (CPFHQEKTPSFTVSDSKRFFYCFGC). A Toprim domain is found at 250-332 (NHSILVEGYF…EKKISFIRLP (83 aa)). Glutamate 256, aspartate 300, and aspartate 302 together coordinate Mg(2+).

The protein belongs to the DnaG primase family. In terms of assembly, monomer. Interacts with DnaB. The cofactor is Zn(2+). Mg(2+) is required as a cofactor.

The enzyme catalyses ssDNA + n NTP = ssDNA/pppN(pN)n-1 hybrid + (n-1) diphosphate.. Its function is as follows. RNA polymerase that catalyzes the synthesis of short RNA molecules used as primers for DNA polymerase during DNA replication. This is DNA primase from Rickettsia felis (strain ATCC VR-1525 / URRWXCal2) (Rickettsia azadi).